The chain runs to 233 residues: Orotidine 5'-phosphate decarboxylase (233 aa).

Substrate contacts are provided by residues aspartate 11, lysine 34, 61–70 (DLKLHDIPNT), threonine 117, arginine 179, glutamine 189, glycine 209, and arginine 210. Lysine 63 acts as the Proton donor in catalysis.

It belongs to the OMP decarboxylase family. Type 1 subfamily. Homodimer.

The catalysed reaction is orotidine 5'-phosphate + H(+) = UMP + CO2. It functions in the pathway pyrimidine metabolism; UMP biosynthesis via de novo pathway; UMP from orotate: step 2/2. Functionally, catalyzes the decarboxylation of orotidine 5'-monophosphate (OMP) to uridine 5'-monophosphate (UMP). This is Orotidine 5'-phosphate decarboxylase from Streptococcus agalactiae serotype V (strain ATCC BAA-611 / 2603 V/R).